The chain runs to 203 residues: ATP-dependent Clp protease proteolytic subunit (203 aa).

Catalysis depends on serine 107, which acts as the Nucleophile. Residue histidine 132 is part of the active site.

This sequence belongs to the peptidase S14 family. Fourteen ClpP subunits assemble into 2 heptameric rings which stack back to back to give a disk-like structure with a central cavity, resembling the structure of eukaryotic proteasomes.

The protein localises to the cytoplasm. The catalysed reaction is Hydrolysis of proteins to small peptides in the presence of ATP and magnesium. alpha-casein is the usual test substrate. In the absence of ATP, only oligopeptides shorter than five residues are hydrolyzed (such as succinyl-Leu-Tyr-|-NHMec, and Leu-Tyr-Leu-|-Tyr-Trp, in which cleavage of the -Tyr-|-Leu- and -Tyr-|-Trp bonds also occurs).. Functionally, cleaves peptides in various proteins in a process that requires ATP hydrolysis. Has a chymotrypsin-like activity. Plays a major role in the degradation of misfolded proteins. This Shewanella halifaxensis (strain HAW-EB4) protein is ATP-dependent Clp protease proteolytic subunit.